Consider the following 218-residue polypeptide: MALSLFTVGQFIFLFWTISITEANIDPAARAAAAAAASKAAVTAADAAAAAATIAASAASVAAATAADDAAASIATINAASAAAKSIAAAAAMAAKDTAAAAASAAAAAVASAAKALETINVKAAYAAATTANTAAAAAAATATTAAAAAAAKATIDNAAAAKAAAVATAVSDAAATAATAAAVAAATLEAAAAKAAATAVSAAAAAAAAAIAFAAAP.

Positions 1 to 23 (MALSLFTVGQFIFLFWTISITEA) are cleaved as a signal peptide.

Belongs to the type-I AFP family. As to quaternary structure, homodimer. Detected in blood serum (at protein level). Detected in liver.

The protein localises to the secreted. Contributes to protect fish blood from freezing at subzero sea water temperatures. Lowers the blood freezing point by about 1.1 degrees at a concentration of 0.1 mg/ml, and by about 1.5 degrees at a concentration of 0.2 mg/ml. Binds to nascent ice crystals and prevents further growth. In Pseudopleuronectes americanus (Winter flounder), this protein is Antifreeze protein Maxi.